The following is a 393-amino-acid chain: (S)-mandelate dehydrogenase (393 aa).

The 377-residue stretch at 1–377 (MSQNLFNVED…SPDYLQNEGV (377 aa)) folds into the FMN hydroxy acid dehydrogenase domain. Residue Y26 participates in (S)-mandelate binding. Residues 79-81 (PTG), S108, and Q129 each bind FMN. Position 131 (Y131) interacts with (S)-mandelate. T156 is an FMN binding site. R165 contributes to the (S)-mandelate binding site. K250 provides a ligand contact to FMN. Residues H274 and R277 each coordinate (S)-mandelate. Residue H274 is the Proton acceptor of the active site. Residues 303-307 (DSGFR) and 326-327 (GR) each bind FMN.

Belongs to the FMN-dependent alpha-hydroxy acid dehydrogenase family. As to quaternary structure, homotetramer. The cofactor is FMN.

It is found in the cell inner membrane. It carries out the reaction (S)-mandelate + A = phenylglyoxylate + AH2. It participates in aromatic compound metabolism; (R)-mandelate degradation; benzoate from (R)-mandelate: step 2/4. Catalyzes the dehydrogenation of (S)-mandelate to phenylglyoxylate (benzoylformate). Is likely involved in the utilization of mandelate as a sole source of carbon and energy for growth. Active in vitro with the artificial electron acceptors 2,6-dichlorophenolindophenol (DCPIP) or ferricyanide, but in vivo most likely transfer the electron pair from the reduced flavin to a component of the electron transport chain in the membrane, possibly a quinone. Shows very low activity with oxygen as the electron acceptor, and also with 3-indolelactate and medium chain 2-hydroxyacids as substrates. This Pseudomonas putida (Arthrobacter siderocapsulatus) protein is (S)-mandelate dehydrogenase.